A 456-amino-acid chain; its full sequence is Gamma-aminobutyric acid receptor subunit alpha-1 (456 aa).

The first 27 residues, 1–27, serve as a signal peptide directing secretion; sequence MRKSPGLSDCLWAWILLLSTLTGRSYG. The Extracellular segment spans residues 28–253; the sequence is QPSLQDELKD…FHLKRKIGYF (226 aa). The N-linked (GlcNAc...) asparagine glycan is linked to Asn-38. Arg-94 contributes to the 4-aminobutanoate binding site. N-linked (GlcNAc...) asparagine glycosylation is present at Asn-138. Thr-157 provides a ligand contact to 4-aminobutanoate. A disulfide bond links Cys-166 and Cys-180. A helical membrane pass occupies residues 254 to 274; the sequence is VIQTYLPCIMTVILSQVSFWL. Trp-273 serves as a coordination point for 3alpha-hydroxy-5alpha-pregnan-11,20-dione. The Cytoplasmic segment spans residues 275–279; that stretch reads NRESV. The chain crosses the membrane as a helical span at residues 280–301; it reads PARTVFGVTTVLTMTTLSISAR. At 302–311 the chain is on the extracellular side; the sequence is NSLPKVAYAT. The helical transmembrane segment at 312–333 threads the bilayer; sequence AMDWFIAVCYAFVFSALIEFAT. Residues 334 to 421 are Cytoplasmic-facing; the sequence is VNYFTKRGYA…TFNSVSKIDR (88 aa). Residues 422 to 441 traverse the membrane as a helical segment; sequence LSRIAFPLLFGIFNLVYWAT. At 442-456 the chain is on the extracellular side; the sequence is YLNREPQLKAPTPHQ.

Belongs to the ligand-gated ion channel (TC 1.A.9) family. Gamma-aminobutyric acid receptor (TC 1.A.9.5) subfamily. GABRA1 sub-subfamily. As to quaternary structure, heteropentamer, formed by a combination of alpha (GABRA1-6), beta (GABRB1-3), gamma (GABRG1-3), delta (GABRD), epsilon (GABRE), rho (GABRR1-3), pi (GABRP) and theta (GABRQ) subunits, each subunit exhibiting distinct physiological and pharmacological properties. Interacts with UBQLN1. Interacts with TRAK1. Interacts with KIF21B. Identified in a complex of 720 kDa composed of LHFPL4, NLGN2, GABRA1, GABRB2, GABRG2 and GABRB3. Interacts with LHFPL4. Interacts with NLGN2. Interacts with SHISA7; interaction leads regulation of GABAAR trafficking, channel deactivation kinetics and pharmacology.

The protein localises to the postsynaptic cell membrane. The protein resides in the cell membrane. Its subcellular location is the cytoplasmic vesicle membrane. The enzyme catalyses chloride(in) = chloride(out). With respect to regulation, allosterically activated by benzodiazepines and the anesthetic alphaxalone. Allosterically activated by pentobarbital. Inhibited by the antagonist bicuculline. Potentiated by histamine. Functionally, alpha subunit of the heteropentameric ligand-gated chloride channel gated by Gamma-aminobutyric acid (GABA), a major inhibitory neurotransmitter in the brain. GABA-gated chloride channels, also named GABA(A) receptors (GABAAR), consist of five subunits arranged around a central pore and contain GABA active binding site(s) located at the alpha and beta subunit interface(s). When activated by GABA, GABAARs selectively allow the flow of chloride anions across the cell membrane down their electrochemical gradient. Alpha-1/GABRA1-containing GABAARs are largely synaptic. Chloride influx into the postsynaptic neuron following GABAAR opening decreases the neuron ability to generate a new action potential, thereby reducing nerve transmission. GABAARs containing alpha-1 and beta-2 or -3 subunits exhibit synaptogenic activity; the gamma-2 subunit being necessary but not sufficient to induce rapid synaptic contacts formation. GABAARs function also as histamine receptor where histamine binds at the interface of two neighboring beta subunits and potentiates GABA response. GABAARs containing alpha, beta and epsilon subunits also permit spontaneous chloride channel activity while preserving the structural information required for GABA-gated openings. Alpha-1-mediated plasticity in the orbitofrontal cortex regulates context-dependent action selection. Together with rho subunits, may also control neuronal and glial GABAergic transmission in the cerebellum. The sequence is that of Gamma-aminobutyric acid receptor subunit alpha-1 from Homo sapiens (Human).